The sequence spans 281 residues: Nucleotide-binding protein CTN_0898 (281 aa).

9 to 16 (GLSGAGKT) lines the ATP pocket. A GTP-binding site is contributed by 58-61 (DVRS).

The protein belongs to the RapZ-like family.

Functionally, displays ATPase and GTPase activities. This Thermotoga neapolitana (strain ATCC 49049 / DSM 4359 / NBRC 107923 / NS-E) protein is Nucleotide-binding protein CTN_0898.